We begin with the raw amino-acid sequence, 464 residues long: Protein FAM90A5 (464 aa).

Disordered stretches follow at residues 16–42 (RAQT…DPRL), 70–389 (PATL…HDGA), and 415–437 (HSPE…SEAP). 2 stretches are compositionally biased toward basic and acidic residues: residues 74–89 (GKKE…KPRV) and 97–114 (NKDK…DPQR). Over residues 180–197 (LASLSPLRKASLSSSSSL) the composition is skewed to low complexity.

The protein belongs to the FAM90 family.

The sequence is that of Protein FAM90A5 from Homo sapiens (Human).